The following is a 144-amino-acid chain: Large ribosomal subunit protein uL15 (144 aa).

Residues 1–51 are disordered; sequence MELNSIKPGSGSKHAKRRVGRGIGSGLGKTAGRGHKGQKSRAGGYHKVGFE. Gly residues predominate over residues 21 to 31; sequence RGIGSGLGKTA.

This sequence belongs to the universal ribosomal protein uL15 family. In terms of assembly, part of the 50S ribosomal subunit.

Its function is as follows. Binds to the 23S rRNA. In Leptothrix cholodnii (strain ATCC 51168 / LMG 8142 / SP-6) (Leptothrix discophora (strain SP-6)), this protein is Large ribosomal subunit protein uL15.